Consider the following 438-residue polypeptide: Glutamyl-tRNA(Gln) amidotransferase subunit D (438 aa).

Residues 92–422 enclose the Asparaginase/glutaminase domain; sequence PTITILGTGG…REAKKMMLTN (331 aa). Catalysis depends on residues T102, T178, D179, and K256.

Belongs to the asparaginase 1 family. GatD subfamily. In terms of assembly, heterodimer of GatD and GatE.

The enzyme catalyses L-glutamyl-tRNA(Gln) + L-glutamine + ATP + H2O = L-glutaminyl-tRNA(Gln) + L-glutamate + ADP + phosphate + H(+). In terms of biological role, allows the formation of correctly charged Gln-tRNA(Gln) through the transamidation of misacylated Glu-tRNA(Gln) in organisms which lack glutaminyl-tRNA synthetase. The reaction takes place in the presence of glutamine and ATP through an activated gamma-phospho-Glu-tRNA(Gln). The GatDE system is specific for glutamate and does not act on aspartate. In Pyrococcus furiosus (strain ATCC 43587 / DSM 3638 / JCM 8422 / Vc1), this protein is Glutamyl-tRNA(Gln) amidotransferase subunit D.